Here is a 121-residue protein sequence, read N- to C-terminus: Small ribosomal subunit protein uS13 (121 aa).

The segment at 92–121 is disordered; that stretch reads RKGLPMRGQRTRTNARTRKGPRRAAQALKK.

The protein belongs to the universal ribosomal protein uS13 family. As to quaternary structure, part of the 30S ribosomal subunit. Forms a loose heterodimer with protein S19. Forms two bridges to the 50S subunit in the 70S ribosome.

Located at the top of the head of the 30S subunit, it contacts several helices of the 16S rRNA. In the 70S ribosome it contacts the 23S rRNA (bridge B1a) and protein L5 of the 50S subunit (bridge B1b), connecting the 2 subunits; these bridges are implicated in subunit movement. Contacts the tRNAs in the A and P-sites. The protein is Small ribosomal subunit protein uS13 of Burkholderia cenocepacia (strain HI2424).